A 194-amino-acid chain; its full sequence is Imidazoleglycerol-phosphate dehydratase (194 aa).

This sequence belongs to the imidazoleglycerol-phosphate dehydratase family.

Its subcellular location is the cytoplasm. It catalyses the reaction D-erythro-1-(imidazol-4-yl)glycerol 3-phosphate = 3-(imidazol-4-yl)-2-oxopropyl phosphate + H2O. The protein operates within amino-acid biosynthesis; L-histidine biosynthesis; L-histidine from 5-phospho-alpha-D-ribose 1-diphosphate: step 6/9. The chain is Imidazoleglycerol-phosphate dehydratase from Clostridium kluyveri (strain NBRC 12016).